A 619-amino-acid chain; its full sequence is DNA polymerase II small subunit (619 aa).

Positions 78–122 (EEAEKTVESQETRASELEEGGVSQVSSGELQELKEESPEISTTEE) are disordered. The segment covering 79 to 93 (EAEKTVESQETRASE) has biased composition (basic and acidic residues).

The protein belongs to the DNA polymerase delta/II small subunit family. Heterodimer of a large subunit and a small subunit.

The enzyme catalyses DNA(n) + a 2'-deoxyribonucleoside 5'-triphosphate = DNA(n+1) + diphosphate. It catalyses the reaction Exonucleolytic cleavage in the 3'- to 5'-direction to yield nucleoside 5'-phosphates.. Its function is as follows. Possesses two activities: a DNA synthesis (polymerase) and an exonucleolytic activity that degrades single-stranded DNA in the 3' to 5' direction. Has a template-primer preference which is characteristic of a replicative DNA polymerase. The chain is DNA polymerase II small subunit (polB) from Pyrococcus abyssi (strain GE5 / Orsay).